We begin with the raw amino-acid sequence, 226 residues long: Phospholipase Culp4 (226 aa).

Positions 1–45 (MIPRPQPHSGRWRAGAARRLTSLVAAAFAAATLLLTPALAPPASA) are cleaved as a signal peptide. An intrachain disulfide couples Cys47 to Cys117. The active-site Nucleophile is Ser128. A disulfide bridge connects residues Cys191 and Cys198. Asp195 is a catalytic residue. Residue His207 is the Proton donor/acceptor of the active site.

The protein belongs to the cutinase family. Homodimer.

It is found in the cell membrane. The protein localises to the secreted. The protein resides in the cell wall. The enzyme catalyses 1,2-dihexadecanoyl-sn-glycero-3-phosphocholine + H2O = 1-hexadecanoyl-sn-glycero-3-phosphocholine + hexadecanoate + H(+). It carries out the reaction a butanoate ester + H2O = an aliphatic alcohol + butanoate + H(+). Inhibited by high concentrations of paraoxon. Inhibited by tetrahydrolipstatin (THL), a specific lipase inhibitor. Its function is as follows. A2-type phospholipase, which is probably involved in the degradation of macrophage membrane. Hydrolyzes dipalmitoylphosphatidylcholine. Also shows moderate esterase activity and hydrolyzes the p-nitrophenol-linked aliphatic ester pNP-butyrate (C4). Does not exhibit cutinase activity. This Mycobacterium tuberculosis (strain ATCC 25618 / H37Rv) protein is Phospholipase Culp4.